Here is a 157-residue protein sequence, read N- to C-terminus: Ribonuclease H (157 aa).

An RNase H type-1 domain is found at 2 to 145 (NAEISKIYTD…CDAIARAFAA (144 aa)). Residues Asp-11, Glu-50, Asp-74, and Asp-137 each contribute to the Mg(2+) site.

Belongs to the RNase H family. In terms of assembly, monomer. Mg(2+) serves as cofactor.

The protein resides in the cytoplasm. It carries out the reaction Endonucleolytic cleavage to 5'-phosphomonoester.. Its function is as follows. Endonuclease that specifically degrades the RNA of RNA-DNA hybrids. The protein is Ribonuclease H of Cyanothece sp. (strain PCC 7425 / ATCC 29141).